We begin with the raw amino-acid sequence, 309 residues long: Homoserine O-succinyltransferase (309 aa).

Cysteine 142 (acyl-thioester intermediate) is an active-site residue. Lysine 163 and serine 192 together coordinate substrate. Histidine 235 functions as the Proton acceptor in the catalytic mechanism. Glutamate 237 is a catalytic residue. Arginine 249 is a substrate binding site.

Belongs to the MetA family.

The protein resides in the cytoplasm. The catalysed reaction is L-homoserine + succinyl-CoA = O-succinyl-L-homoserine + CoA. The protein operates within amino-acid biosynthesis; L-methionine biosynthesis via de novo pathway; O-succinyl-L-homoserine from L-homoserine: step 1/1. Functionally, transfers a succinyl group from succinyl-CoA to L-homoserine, forming succinyl-L-homoserine. The protein is Homoserine O-succinyltransferase of Edwardsiella ictaluri (strain 93-146).